Reading from the N-terminus, the 344-residue chain is Dihydroorotase (344 aa).

Residues His14 and His16 each coordinate Zn(2+). Substrate-binding positions include 16–18 (HLR) and Asn42. Zn(2+) is bound by residues Lys100, His137, and His175. Lys100 is modified (N6-carboxylysine). His137 is a substrate binding site. Substrate is bound at residue Leu220. Residue Asp248 coordinates Zn(2+). Residue Asp248 is part of the active site. His252 and Ala264 together coordinate substrate.

Belongs to the metallo-dependent hydrolases superfamily. DHOase family. Class II DHOase subfamily. As to quaternary structure, homodimer. It depends on Zn(2+) as a cofactor.

It catalyses the reaction (S)-dihydroorotate + H2O = N-carbamoyl-L-aspartate + H(+). The protein operates within pyrimidine metabolism; UMP biosynthesis via de novo pathway; (S)-dihydroorotate from bicarbonate: step 3/3. Catalyzes the reversible cyclization of carbamoyl aspartate to dihydroorotate. This chain is Dihydroorotase, found in Cupriavidus taiwanensis (strain DSM 17343 / BCRC 17206 / CCUG 44338 / CIP 107171 / LMG 19424 / R1) (Ralstonia taiwanensis (strain LMG 19424)).